The sequence spans 416 residues: MGNFKLKCLKCGREYGQEYRLTCENDNAFLRAEYSEKRLVLRNQPGIGRFHSWLPVQEELTTDAGPITYKSEAFARELGLSNLYIGFSGYWPERGAFIKTCSFKELEAHPTMQLLKETGGKAVVLASAGNTGRAFAHVSALTGTDVYIVVPESGASKLWLPEEPTESVHLISMSPGNDYTDAINLAGRIAKLPGMVSEGGARNIARRDGMGTVMLDAAVTIGKMPDHYFQAVGSGTGGISVWEAAMRLRTDGRFGQKLPKLQLAQNLPFVPMYNAWQEKRREIIPELDMKDAKKQVEETYATVLTNRTPPYGVMGGLYDALTDTDGIMYAITREEALEAKALFESLEGIDILPPSAVATASLLKAVEEGNVSKDETILLNLAGGGYKRLKEDYTLYQIEPVATAKNPDISLDELKI.

Lys-104 is modified (N6-(pyridoxal phosphate)lysine). Asn-130 serves as a coordination point for pyridoxal 5'-phosphate.

Belongs to the threonine synthase family. Cysteate synthase subfamily. In terms of assembly, homotrimer. It depends on pyridoxal 5'-phosphate as a cofactor.

The catalysed reaction is O-phospho-L-serine + sulfite + H(+) = L-cysteate + phosphate. It functions in the pathway cofactor biosynthesis; coenzyme M biosynthesis. In terms of biological role, specifically catalyzes the beta-elimination of phosphate from L-phosphoserine and the beta-addition of sulfite to the dehydroalanine intermediate to produce L-cysteate. In Methanosarcina barkeri (strain Fusaro / DSM 804), this protein is Cysteate synthase.